The sequence spans 456 residues: uncharacterized protein (456 aa).

The span at 415 to 428 shows a compositional bias: low complexity; that stretch reads SNSNGSSSSGNSSS. Residues 415–444 are disordered; that stretch reads SNSNGSSSSGNSSSIYNSHLMNDKKKNNNA.

This is an uncharacterized protein from Saccharomyces cerevisiae (strain ATCC 204508 / S288c) (Baker's yeast).